A 304-amino-acid polypeptide reads, in one-letter code: NAD kinase (304 aa).

Residue Asp-77 is the Proton acceptor of the active site. NAD(+)-binding positions include 77 to 78 (DG), Arg-82, 151 to 152 (NE), Arg-162, Asp-181, and 192 to 197 (TAYSFS).

Belongs to the NAD kinase family. The cofactor is a divalent metal cation.

Its subcellular location is the cytoplasm. The enzyme catalyses NAD(+) + ATP = ADP + NADP(+) + H(+). In terms of biological role, involved in the regulation of the intracellular balance of NAD and NADP, and is a key enzyme in the biosynthesis of NADP. Catalyzes specifically the phosphorylation on 2'-hydroxyl of the adenosine moiety of NAD to yield NADP. The protein is NAD kinase of Leifsonia xyli subsp. xyli (strain CTCB07).